Here is a 1485-residue protein sequence, read N- to C-terminus: Sex-determining transformer protein 2 (1485 aa).

The signal sequence occupies residues 1–28; the sequence is MSLRSNKLLVAAVIFTVVTFGLLLTSSI. 9 consecutive transmembrane segments (helical) span residues 438-458, 490-510, 584-604, 732-752, 923-943, 950-970, 980-1000, 1033-1053, and 1063-1083; these read VVYF…FFAW, IELN…NTYL, WPFI…FVDI, GILL…VMLI, LLAS…FSIT, LIFS…ISLF, DSAV…LSLF, AQVF…AGVV, and TVIL…VLVA. Residues 1131–1271 form an interaction with fem-3 region; sequence DFHIRPTNMS…MLHMIEKVQK (141 aa). A disordered region spans residues 1143–1175; the sequence is YAPPPAKKRAKQTNNETDPEKKEDEPGTSNANN. A helical membrane pass occupies residues 1181 to 1201; that stretch reads AAHRLAILPWHFVLGGIPVDL. Disordered stretches follow at residues 1228 to 1252, 1275 to 1306, and 1348 to 1384; these read SELE…PAPE, EKEA…PSHR, and EMPP…PPHP. Over residues 1275-1284 the composition is skewed to basic and acidic residues; it reads EKEAKEKVHQ. Positions 1401-1422 are MX regulatory domain; required for tra-1 binding; it reads CEDVYWTYNDGRLPPNVAMPPR. The disordered stretch occupies residues 1442-1485; the sequence is PPGQPSIPIPAEAMALREERARAHREQEQRDNSQSPSPSPEPGL. A compositionally biased stretch (basic and acidic residues) spans 1456–1472; that stretch reads ALREERARAHREQEQRD.

In terms of assembly, interacts with tra-1 and fem-3. In terms of tissue distribution, somatic and germline tissues.

The protein resides in the membrane. Its function is as follows. Plays a major role in controlling sexual cell fates. Promotes female development in XX animals where it sequesters one or more of the FEM proteins to the membrane thereby freeing the tra-1 protein (a putative transcription factor) to enter the nucleus and promote female development. In XO animals it acts as a receptor for her-1 which prevents it from binding to FEM proteins thereby repressing the activity of tra-1. Negatively regulates male development when bound to fem-3 and is required together with tra-1 for promoting spermatogenesis. In Caenorhabditis remanei (Caenorhabditis vulgaris), this protein is Sex-determining transformer protein 2.